A 104-amino-acid polypeptide reads, in one-letter code: Turripeptide OL55 (104 aa).

Post-translationally, contains 8 disulfide bonds. Expressed by the venom duct.

The protein localises to the secreted. Its function is as follows. Acts as a neurotoxin by inhibiting an ion channel. The protein is Turripeptide OL55 of Iotyrris olangoensis (Sea snail).